The primary structure comprises 398 residues: Galactose-3-O-sulfotransferase 2 (398 aa).

At 1 to 10 (MMSMLGGLQR) the chain is on the cytoplasmic side. A helical; Signal-anchor for type II membrane protein transmembrane segment spans residues 11–31 (YFRVILLLLLALTLLLLAGFL). Over 32 to 398 (HSDLELDTPL…PLKNIPFLGA (367 aa)) the chain is Lumenal. N-linked (GlcNAc...) asparagine glycans are attached at residues N79, N132, N179, N287, N330, and N360.

The protein belongs to the galactose-3-O-sulfotransferase family. In terms of tissue distribution, ubiquitous. Detected in heart, stomach, colon, liver and spleen, in epithelial cells lining the lower to middle layer of the crypts in colonic mucosa, hepatocytes surrounding the central vein of the liver, extravillous cytotrophoblasts in the basal plate of the septum of the placenta, renal tubules of the kidney, and neuronal cells of the cerebral cortex.

It localises to the golgi apparatus. The protein resides in the golgi stack membrane. It participates in protein modification; carbohydrate sulfation. With respect to regulation, strongly inhibited by Cu(2+) and Zn(2+). In terms of biological role, transfers a sulfate group to the hydroxyl group at C3 of non-reducing beta-galactosyl residues. Acts both on type 1 (Gal-beta-1,3-GlcNAc) and type 2 (Gal-beta-1,4-GlcNAc) chains with similar efficiency. The protein is Galactose-3-O-sulfotransferase 2 (GAL3ST2) of Homo sapiens (Human).